We begin with the raw amino-acid sequence, 474 residues long: Glycogen synthase (474 aa).

Lys-15 provides a ligand contact to ADP-alpha-D-glucose.

This sequence belongs to the glycosyltransferase 1 family. Bacterial/plant glycogen synthase subfamily.

The catalysed reaction is [(1-&gt;4)-alpha-D-glucosyl](n) + ADP-alpha-D-glucose = [(1-&gt;4)-alpha-D-glucosyl](n+1) + ADP + H(+). It functions in the pathway glycan biosynthesis; glycogen biosynthesis. Its function is as follows. Synthesizes alpha-1,4-glucan chains using ADP-glucose. This is Glycogen synthase from Chlamydia muridarum (strain MoPn / Nigg).